A 343-amino-acid chain; its full sequence is Mitochondrial distribution and morphology protein 34 (343 aa).

An SMP-LTD domain is found at 1-196 (MSFVFPSWST…LPGIIHRLSQ (196 aa)). 2 disordered regions span residues 227–255 (EVEE…IGPG) and 300–325 (GAGT…KAKR). Over residues 306–317 (SGRASLASSSVG) the composition is skewed to low complexity.

The protein belongs to the MDM34 family. Component of the ER-mitochondria encounter structure (ERMES) or MDM complex, composed of MMM1, MDM10, MDM12 and MDM34.

The protein resides in the mitochondrion outer membrane. Functionally, component of the ERMES/MDM complex, which serves as a molecular tether to connect the endoplasmic reticulum (ER) and mitochondria. Components of this complex are involved in the control of mitochondrial shape and protein biogenesis, and function in nonvesicular lipid trafficking between the ER and mitochondria. MDM34 is required for the interaction of the ER-resident membrane protein MMM1 and the outer mitochondrial membrane-resident beta-barrel protein MDM10. The protein is Mitochondrial distribution and morphology protein 34 of Cryptococcus neoformans var. neoformans serotype D (strain B-3501A) (Filobasidiella neoformans).